A 213-amino-acid chain; its full sequence is BAG family molecular chaperone regulator 6, mitochondrial (213 aa).

Residues 53–82 (DDAAAARIQAAFRGHLVRRHAAAVRGADDE) enclose the IQ domain. The region spanning 75-152 (AVRGADDEAT…GLQEVFDAVL (78 aa)) is the BAG domain.

As to quaternary structure, interacts with CAM1-1 under normal conditions. Dissociation of the interaction when calcium-CAM1-1 binding increases under saline-alkaline stress.

The protein resides in the mitochondrion. Its function is as follows. Co-chaperone that regulates stress responses. Acts as a negative regulator of saline-alkaline stress tolerance. May participate in stress response through regulating the homeostasis of iron, manganese and zinc ions. The chain is BAG family molecular chaperone regulator 6, mitochondrial from Oryza sativa subsp. japonica (Rice).